The primary structure comprises 450 residues: Phosphoglucosamine mutase (450 aa).

Ser101 serves as the catalytic Phosphoserine intermediate. Positions 101, 241, 243, and 245 each coordinate Mg(2+). Ser101 carries the phosphoserine modification.

Belongs to the phosphohexose mutase family. It depends on Mg(2+) as a cofactor. In terms of processing, activated by phosphorylation.

The catalysed reaction is alpha-D-glucosamine 1-phosphate = D-glucosamine 6-phosphate. Its function is as follows. Catalyzes the conversion of glucosamine-6-phosphate to glucosamine-1-phosphate. The protein is Phosphoglucosamine mutase of Listeria innocua serovar 6a (strain ATCC BAA-680 / CLIP 11262).